Reading from the N-terminus, the 247-residue chain is Adenosylcobinamide-GDP ribazoletransferase (247 aa).

The next 5 helical transmembrane spans lie at 34–54 (IITF…VFMV), 59–79 (CGAP…TGGF), 113–133 (GGLA…ELAL), 138–158 (ILAS…LLMY), and 194–214 (VLLP…AIFI).

The protein belongs to the CobS family. Mg(2+) is required as a cofactor.

Its subcellular location is the cell inner membrane. The enzyme catalyses alpha-ribazole + adenosylcob(III)inamide-GDP = adenosylcob(III)alamin + GMP + H(+). The catalysed reaction is alpha-ribazole 5'-phosphate + adenosylcob(III)inamide-GDP = adenosylcob(III)alamin 5'-phosphate + GMP + H(+). Its pathway is cofactor biosynthesis; adenosylcobalamin biosynthesis; adenosylcobalamin from cob(II)yrinate a,c-diamide: step 7/7. Joins adenosylcobinamide-GDP and alpha-ribazole to generate adenosylcobalamin (Ado-cobalamin). Also synthesizes adenosylcobalamin 5'-phosphate from adenosylcobinamide-GDP and alpha-ribazole 5'-phosphate. This Escherichia coli O81 (strain ED1a) protein is Adenosylcobinamide-GDP ribazoletransferase.